A 199-amino-acid polypeptide reads, in one-letter code: Shikimate kinase (199 aa).

G14 to T19 provides a ligand contact to ATP. S18 is a Mg(2+) binding site. Substrate-binding residues include D36, R60, and G82. R120 is an ATP binding site. Residue R147 participates in substrate binding. The segment at Y179–K199 is disordered.

The protein belongs to the shikimate kinase family. In terms of assembly, monomer. Mg(2+) is required as a cofactor.

The protein localises to the cytoplasm. It catalyses the reaction shikimate + ATP = 3-phosphoshikimate + ADP + H(+). The protein operates within metabolic intermediate biosynthesis; chorismate biosynthesis; chorismate from D-erythrose 4-phosphate and phosphoenolpyruvate: step 5/7. Its function is as follows. Catalyzes the specific phosphorylation of the 3-hydroxyl group of shikimic acid using ATP as a cosubstrate. The sequence is that of Shikimate kinase from Chlorobium phaeobacteroides (strain BS1).